Consider the following 86-residue polypeptide: Small ribosomal subunit protein bS20 (86 aa).

The segment covering 1-11 has biased composition (basic residues); the sequence is MANHKSALKRA. The segment at 1–27 is disordered; sequence MANHKSALKRARQNEERRIRNRARKTR.

It belongs to the bacterial ribosomal protein bS20 family.

Its function is as follows. Binds directly to 16S ribosomal RNA. The protein is Small ribosomal subunit protein bS20 of Syntrophobacter fumaroxidans (strain DSM 10017 / MPOB).